Consider the following 123-residue polypeptide: Large ribosomal subunit protein bL17 (123 aa).

The protein belongs to the bacterial ribosomal protein bL17 family. As to quaternary structure, part of the 50S ribosomal subunit. Contacts protein L32.

The sequence is that of Large ribosomal subunit protein bL17 from Borrelia hermsii (strain HS1 / DAH).